The primary structure comprises 146 residues: Prolactin-inducible protein homolog (146 aa).

An N-terminal signal peptide occupies residues 1 to 28 (MRLFQLLFRASPATLLLVLCLQLGANKA). Residue Q29 is modified to Pyrrolidone carboxylic acid. Cystine bridges form between C65/C91 and C89/C123. The N-linked (GlcNAc...) asparagine glycan is linked to N105.

Belongs to the PIP family. In terms of assembly, monomer. Interacts with AZGP1.

The protein resides in the secreted. This chain is Prolactin-inducible protein homolog (PIP), found in Pan troglodytes (Chimpanzee).